We begin with the raw amino-acid sequence, 367 residues long: tRNA-specific 2-thiouridylase MnmA (367 aa).

Residues 6-13 and methionine 32 each bind ATP; that span reads AMSGGVDS. Cysteine 101 functions as the Nucleophile in the catalytic mechanism. Cysteine 101 and cysteine 193 are oxidised to a cystine. Glycine 125 is a binding site for ATP. The interval 143–145 is interaction with tRNA; sequence KDQ. Cysteine 193 acts as the Cysteine persulfide intermediate in catalysis.

The protein belongs to the MnmA/TRMU family.

The protein resides in the cytoplasm. It carries out the reaction S-sulfanyl-L-cysteinyl-[protein] + uridine(34) in tRNA + AH2 + ATP = 2-thiouridine(34) in tRNA + L-cysteinyl-[protein] + A + AMP + diphosphate + H(+). Its function is as follows. Catalyzes the 2-thiolation of uridine at the wobble position (U34) of tRNA, leading to the formation of s(2)U34. The chain is tRNA-specific 2-thiouridylase MnmA from Mycobacterium tuberculosis (strain CDC 1551 / Oshkosh).